The sequence spans 750 residues: Photosystem I P700 chlorophyll a apoprotein A1 (750 aa).

8 helical membrane-spanning segments follow: residues 70-93 (VFSA…FHGA), 156-179 (LYCT…FHYH), 195-219 (LNHH…HVSL), 291-309 (IAHH…GHMY), 346-369 (WHAQ…HHMY), 385-411 (LSLF…IFMV), 433-455 (AIIS…LYIH), and 531-549 (FLVH…LILL). Residues C573 and C582 each contribute to the [4Fe-4S] cluster site. A run of 2 helical transmembrane segments spans residues 589 to 610 (HVFL…HFSW) and 664 to 686 (LSAY…MFLF). Residue H675 participates in chlorophyll a' binding. Positions 683 and 691 each coordinate chlorophyll a. W692 provides a ligand contact to phylloquinone. Residues 724 to 744 (AVGVTHYLLGGIATTWAFFLA) form a helical membrane-spanning segment.

This sequence belongs to the PsaA/PsaB family. In terms of assembly, the PsaA/B heterodimer binds the P700 chlorophyll special pair and subsequent electron acceptors. PSI consists of a core antenna complex that captures photons, and an electron transfer chain that converts photonic excitation into a charge separation. The eukaryotic PSI reaction center is composed of at least 11 subunits. It depends on P700 is a chlorophyll a/chlorophyll a' dimer, A0 is one or more chlorophyll a, A1 is one or both phylloquinones and FX is a shared 4Fe-4S iron-sulfur center. as a cofactor.

The protein localises to the plastid. It localises to the chloroplast thylakoid membrane. The catalysed reaction is reduced [plastocyanin] + hnu + oxidized [2Fe-2S]-[ferredoxin] = oxidized [plastocyanin] + reduced [2Fe-2S]-[ferredoxin]. Its function is as follows. PsaA and PsaB bind P700, the primary electron donor of photosystem I (PSI), as well as the electron acceptors A0, A1 and FX. PSI is a plastocyanin-ferredoxin oxidoreductase, converting photonic excitation into a charge separation, which transfers an electron from the donor P700 chlorophyll pair to the spectroscopically characterized acceptors A0, A1, FX, FA and FB in turn. Oxidized P700 is reduced on the lumenal side of the thylakoid membrane by plastocyanin. The protein is Photosystem I P700 chlorophyll a apoprotein A1 of Populus trichocarpa (Western balsam poplar).